A 412-amino-acid chain; its full sequence is Pyruvate dehydrogenase E1 component subunit alpha, mitochondrial (412 aa).

Positions 104, 130, 131, 169, 177, 179, 208, 209, 210, 237, and 239 each coordinate pyruvate. Thiamine diphosphate contacts are provided by Tyr130 and Arg131. Thiamine diphosphate contacts are provided by Gly177, Val179, Asp208, Gly209, Ala210, and Asn237. Mg(2+) is bound at residue Asp208. Mg(2+)-binding residues include Asn237 and Tyr239. His304 provides a ligand contact to thiamine diphosphate.

In terms of assembly, tetramer of 2 alpha and 2 beta subunits. Thiamine diphosphate serves as cofactor. It depends on Mg(2+) as a cofactor.

Its subcellular location is the mitochondrion matrix. It carries out the reaction N(6)-[(R)-lipoyl]-L-lysyl-[protein] + pyruvate + H(+) = N(6)-[(R)-S(8)-acetyldihydrolipoyl]-L-lysyl-[protein] + CO2. E1 activity is regulated by phosphorylation (inactivation) and dephosphorylation (activation) of the alpha subunit. Its function is as follows. The pyruvate dehydrogenase complex catalyzes the overall conversion of pyruvate to acetyl-CoA and CO(2). It contains multiple copies of three enzymatic components: pyruvate dehydrogenase (E1), dihydrolipoamide acetyltransferase (E2) and lipoamide dehydrogenase (E3). The chain is Pyruvate dehydrogenase E1 component subunit alpha, mitochondrial (PDA1) from Kluyveromyces lactis (strain ATCC 8585 / CBS 2359 / DSM 70799 / NBRC 1267 / NRRL Y-1140 / WM37) (Yeast).